Reading from the N-terminus, the 549-residue chain is Glucose-6-phosphate isomerase (549 aa).

Glu-355 serves as the catalytic Proton donor. Residues His-387 and Lys-515 contribute to the active site.

It belongs to the GPI family.

It localises to the cytoplasm. The enzyme catalyses alpha-D-glucose 6-phosphate = beta-D-fructose 6-phosphate. It functions in the pathway carbohydrate biosynthesis; gluconeogenesis. It participates in carbohydrate degradation; glycolysis; D-glyceraldehyde 3-phosphate and glycerone phosphate from D-glucose: step 2/4. Functionally, catalyzes the reversible isomerization of glucose-6-phosphate to fructose-6-phosphate. The protein is Glucose-6-phosphate isomerase of Haemophilus influenzae (strain ATCC 51907 / DSM 11121 / KW20 / Rd).